Reading from the N-terminus, the 416-residue chain is Multifunctional CCA protein (416 aa).

Residues Gly-8 and Arg-11 each coordinate ATP. Positions 8 and 11 each coordinate CTP. Mg(2+) is bound by residues Asp-21 and Asp-23. The ATP site is built by Arg-91, Arg-137, and Arg-140. Residues Arg-91, Arg-137, and Arg-140 each coordinate CTP. In terms of domain architecture, HD spans 228–335 (SFIHTMLVLK…ITLFNRFDVW (108 aa)).

This sequence belongs to the tRNA nucleotidyltransferase/poly(A) polymerase family. Bacterial CCA-adding enzyme type 1 subfamily. In terms of assembly, monomer. Can also form homodimers and oligomers. The cofactor is Mg(2+). Ni(2+) is required as a cofactor.

It carries out the reaction a tRNA precursor + 2 CTP + ATP = a tRNA with a 3' CCA end + 3 diphosphate. The enzyme catalyses a tRNA with a 3' CCA end + 2 CTP + ATP = a tRNA with a 3' CCACCA end + 3 diphosphate. In terms of biological role, catalyzes the addition and repair of the essential 3'-terminal CCA sequence in tRNAs without using a nucleic acid template. Adds these three nucleotides in the order of C, C, and A to the tRNA nucleotide-73, using CTP and ATP as substrates and producing inorganic pyrophosphate. tRNA 3'-terminal CCA addition is required both for tRNA processing and repair. Also involved in tRNA surveillance by mediating tandem CCA addition to generate a CCACCA at the 3' terminus of unstable tRNAs. While stable tRNAs receive only 3'-terminal CCA, unstable tRNAs are marked with CCACCA and rapidly degraded. The chain is Multifunctional CCA protein from Haemophilus influenzae (strain PittGG).